Reading from the N-terminus, the 1045-residue chain is Protein madd-4 (1045 aa).

The first 23 residues, 1–23 (MKCSYTVVFLLFYLLIASFHVDA), serve as a signal peptide directing secretion. 5 consecutive TSP type-1 domains span residues 24-71 (LSWA…KTCE), 236-292 (RCRW…NCVS), 294-510 (SCGR…HPCP), 512-572 (FWLT…NVVA), and 576-635 (TWVT…GSCS). 3 disulfides stabilise this stretch: Cys35–Cys65, Cys39–Cys70, and Cys50–Cys55. N-linked (GlcNAc...) asparagine glycans are attached at residues Asn268 and Asn280. One can recognise an Ig-like C2-type domain in the interval 637-732 (PELLSNRVFE…FTDRLQGNVT (96 aa)). A disulfide bridge connects residues Cys674 and Cys722. Asn730 and Asn781 each carry an N-linked (GlcNAc...) asparagine glycan. The region spanning 811–873 (RWDIGHWSEC…TRPCHREDCP (63 aa)) is the TSP type-1 6 domain. N-linked (GlcNAc...) asparagine glycosylation is found at Asn899 and Asn906. The TSP type-1 7 domain occupies 932–990 (CKAEWRTSDWGSCSSECGTGGVQLRLLSCVWISSGRPAGRNCEQMRRPHSARACVADEP). One can recognise a PLAC domain in the interval 1004-1041 (RDASCQDQSRFCDIIKLFHSCDSLEVRQKCCSTCTFVE).

In terms of assembly, interacts with eva-1 (via the SUEL-type lectin domain). Interacts with unc-5. Interacts with unc-40; the interaction is required for the localization of unc-40 to postsynaptic domains. Isoform a forms homodimers and heterodimers with isoform b. Isoform b forms homodimers and heterodimers with isoform a. Isoform b interacts with nlg-1 (via extracellular domain); the interaction is required for nlg-1 localization to postsynaptic domains. Isoform b interacts (via the Ig-like C2-type domain) with nrx-1 (via C-terminus). In terms of tissue distribution, isoform a: Expressed in the commissural GABAergic and cholinergic motor neurons in the first larval stage but only in the cholinergic motor neurons in later larval stages and in adult animals. At the L1 larval stage, mainly localized at the nerve ring and at the dorsal cord. Isoform b: Expressed in the commissural GABAergic and cholinergic motor neurons whose cell bodies reside in the ventral nerve cord and which extend axons into the ventral and dorsal nerve cord. Also expressed in the head neurons RIA, RIC, lateral IL1s, lateral IL2s, OLLs, RMEs and SABs, all of which extend axons into the nerve ring. Expressed in the embryogenic blast cells and the corresponding terminally differentiated ventral cord motor neurons and head neurons.

Its subcellular location is the cell projection. It localises to the axon. The protein localises to the secreted. The protein resides in the synapse. It is found in the extracellular space. Its subcellular location is the extracellular matrix. Component of an extracellular matrix cue that is involved in the guidance of dorsoventral midline migrations and in the specification of postsynaptic domains at neuromuscular junctions (NMJs). Acts as a ligand for the netrin receptor unc-40 and the neuroligin receptor nlg-1. Secreted by the dorsal and ventral nerve cords to attract sensory axons and muscle membrane extensions called muscle arms. In parallel with unc-6 and slt-1, involved in the netrin receptor unc-40 dependent guidance of the AVM and PVM mechanosensory axons along the dorsal-ventral axis. The unc-40 coreceptor eva-1 is enhancing the responsiveness of unc-40 to the madd-4 guidance cue to attract the muscle arm extensions and AVM mechanosensory axons towards the dorsoventral midline. Acts as a synaptic organizer and is required for the specification of inhibitory GABAergic and excitatory cholinergic identities of postsynaptic domains at neuromuscular junctions (NMJs). Required for the recruitment of unc-40 to both cholinergic and GABAergic NMJs. Promotes the clustering of ACh receptors and GABA(A) receptors at postsynaptic sites during synaptogenesis. The binding to the presynaptic adhesion protein nrx-1 and to the neuroligin nlg-1 at postsynaptic sites promotes clustering of GABAergic receptors at postsynaptic NMJs, thereby contributing to normal GABAergic synaptic transmission. Functionally, isoform a and isoform c: Promotes the clustering of acetylcholine receptors (AChR) at excitatory cholinergic synapses of NMJs via the netrin receptor unc-40. Its function is as follows. Acts as a guidance cue in the attraction of muscle membrane extensions (muscle arms) to the dorsal cord and in cooperation with unc-6 to the ventral cord via the netrin receptor unc-40 and via the unc-40 coreceptor eva-1. Together with nrx-1, clusters netrin receptor unc-40 and neuroligin nlg-1 at postsynaptic sites of GABAergic NMJs, thereby promoting the recruitment of GABA(A) receptors at GABAergic synapses. Prevents the recruitment of GABAergic receptors to cholinergic synapses. The sequence is that of Protein madd-4 from Caenorhabditis elegans.